A 356-amino-acid polypeptide reads, in one-letter code: tRNA N6-adenosine threonylcarbamoyltransferase (356 aa).

Fe cation contacts are provided by His-115 and His-119. Residues 138–142 (LVSGG), Asp-171, Gly-184, and Asn-283 each bind substrate. Asp-311 lines the Fe cation pocket.

This sequence belongs to the KAE1 / TsaD family. Requires Fe(2+) as cofactor.

It is found in the cytoplasm. The enzyme catalyses L-threonylcarbamoyladenylate + adenosine(37) in tRNA = N(6)-L-threonylcarbamoyladenosine(37) in tRNA + AMP + H(+). Functionally, required for the formation of a threonylcarbamoyl group on adenosine at position 37 (t(6)A37) in tRNAs that read codons beginning with adenine. Is involved in the transfer of the threonylcarbamoyl moiety of threonylcarbamoyl-AMP (TC-AMP) to the N6 group of A37, together with TsaE and TsaB. TsaD likely plays a direct catalytic role in this reaction. The sequence is that of tRNA N6-adenosine threonylcarbamoyltransferase from Prochlorococcus marinus (strain MIT 9515).